Consider the following 171-residue polypeptide: S-ribosylhomocysteine lyase (171 aa).

Fe cation is bound by residues His54, His58, and Cys128.

Belongs to the LuxS family. Homodimer. Requires Fe cation as cofactor.

It carries out the reaction S-(5-deoxy-D-ribos-5-yl)-L-homocysteine = (S)-4,5-dihydroxypentane-2,3-dione + L-homocysteine. In terms of biological role, involved in the synthesis of autoinducer 2 (AI-2) which is secreted by bacteria and is used to communicate both the cell density and the metabolic potential of the environment. The regulation of gene expression in response to changes in cell density is called quorum sensing. Catalyzes the transformation of S-ribosylhomocysteine (RHC) to homocysteine (HC) and 4,5-dihydroxy-2,3-pentadione (DPD). This chain is S-ribosylhomocysteine lyase, found in Yersinia pseudotuberculosis serotype O:1b (strain IP 31758).